The following is a 188-amino-acid chain: Pyridoxal 5'-phosphate synthase subunit PdxT (188 aa).

G47–S49 is an L-glutamine binding site. The active-site Nucleophile is the C79. Residues R105 and I134 to R135 contribute to the L-glutamine site. Active-site charge relay system residues include H170 and E172.

The protein belongs to the glutaminase PdxT/SNO family. In terms of assembly, in the presence of PdxS, forms a dodecamer of heterodimers. Only shows activity in the heterodimer.

The enzyme catalyses aldehydo-D-ribose 5-phosphate + D-glyceraldehyde 3-phosphate + L-glutamine = pyridoxal 5'-phosphate + L-glutamate + phosphate + 3 H2O + H(+). It carries out the reaction L-glutamine + H2O = L-glutamate + NH4(+). Its pathway is cofactor biosynthesis; pyridoxal 5'-phosphate biosynthesis. Its function is as follows. Catalyzes the hydrolysis of glutamine to glutamate and ammonia as part of the biosynthesis of pyridoxal 5'-phosphate. The resulting ammonia molecule is channeled to the active site of PdxS. The polypeptide is Pyridoxal 5'-phosphate synthase subunit PdxT (Listeria monocytogenes serotype 4b (strain F2365)).